Reading from the N-terminus, the 871-residue chain is Dual O-methyltransferase/FAD-dependent monooxygenase CTB3 (871 aa).

The interval 1–429 is O-methyltransferase; that stretch reads MMQFQRDLEA…GLLTVRSAGQ (429 aa). Position 279 (Asp279) interacts with S-adenosyl-L-methionine. His331 (proton acceptor) is an active-site residue. The segment at 430 to 871 is FAD-dependent monooxygenase; the sequence is TALSGTNTLT…NLVDCSEFVF (442 aa). FAD-binding residues include Glu485, Arg569, and Ala806.

This sequence in the C-terminal section; belongs to the paxM FAD-dependent monooxygenase family. It in the N-terminal section; belongs to the class I-like SAM-binding methyltransferase superfamily. Cation-independent O-methyltransferase family. COMT subfamily.

It catalyses the reaction nor-toralactone + S-adenosyl-L-methionine = toralactone + S-adenosyl-L-homocysteine + H(+). The catalysed reaction is toralactone + NADH + O2 + H(+) = 1-(3,4,5-trihydroxy-7-methoxynaphthalen-2-yl)propan-2-one + CO2 + NAD(+). Its pathway is mycotoxin biosynthesis. Functionally, dual O-methyltransferase/FAD-dependent monooxygenase; part of the gene cluster that mediates the biosynthesis of cercosporin, a light-activated, non-host-selective toxin. The perylenequinone chromophore of cercosporin absorbs light energy to attain an electronically-activated triplet state and produces active oxygen species such as the hydroxyl radical, superoxide, hydrogen peroxide or singlet oxygen upon reaction with oxygen molecules. These reactive oxygen species cause damage to various cellular components including lipids, proteins and nucleic acids. The first step of cercosporin biosynthesis is performed by the polyketide synthase CTB1 which catalyzes the formation of nor-toralactone. The starter unit acyltransferase (SAT) domain of CTB1 initiates polyketide extension by the selective utilization of acetyl-CoA, which is elongated to the heptaketide in the beta-ketoacyl synthase (KS) domain by successive condensations with six malonyl units introduced by the malonyl acyltransferase (MAT) domain. The product template (PT) domain catalyzes C4-C9 and C2-C11 aldol cyclizations and dehydrations to a trihydroxynaphthalene, which is thought to be delivered to the thioesterase (TE) domain for product release. The bifunctional enzyme CTB3 then methylates nor-toralactone to toralactone before conducting an unusual oxidative aromatic ring opening. The O-methyltransferase CTB2 further methylates the nascent OH-6 of the CBT3 product, blocking further oxidation at this site before the reductase CTB6 reduces the 2-oxopropyl ketone at position C7, giving naphthalene. The FAD-dependent monooxygenase CTB5 in concert with the multicopper oxidase CTB12 are responsible for homodimerization of naphthalene with CTB7 installing the dioxepine moiety, finally producing cercosporin. The fasciclin domain-containing protein CTB11 might act with CTB5 and CTB12 whereas the roles of CTB9 and CTB10 have still to be elucidated. This Cercospora nicotianae (Barn spot disease fungus) protein is Dual O-methyltransferase/FAD-dependent monooxygenase CTB3.